We begin with the raw amino-acid sequence, 1085 residues long: MQRTGDGERPRFFQQDLDVIPDDKGSDLFIQTAEGPDGHVDDEVIEDKTRFITNLKEVLGALPDDILEGYWNSYGASKDGLSKAIQQHFEGKETKGCSDAHDDLNTETQNSQNTIVNGHVSNQIKRASEGGLPILKRKKQLCCWRRFLGSTQVNAMATRPTAQPLKYGSELLIRRTSGQPNNSGLRSRKKPGFSQYVRFCDATSSRELGRLPEDISEILHTLLQTPGVEFKATMIFCNSKRLSVGDLFVVRLDCFVTSLLFDPALPGKAEDEQFQQRNRALMLLFKNLNMTPLAEGADLVPEKPEFYDLEEDESITDATVNSPTASDDYMDLNQLRNFYRSTQESASIFKLRETTPPVDKFQLELRRYQKQGLTWMLLREREHAILEPGSQDALADGPMDPMWRMFKWPRDTSWDVSRGTTYVSLEADIPDKFYANLHTGEFSLVKPISKSILKGGILADEMGLGKTISILALITMVPSDTKHLLTTAQEKPPVGHLSLELGISTVKPYTASTTLIVVPMSLLPQWRNEFVRVNDGNGLYCEVYYAGNVSNLRTLLVKQKSPPSVVLTTYGVVQTEWSKLQQFDYEASNEGLFSVEFFRIILDEGHNIRNRTTKTSKAVMALTSRRKWVLTGTPIMNRLDDLFSLIKFMNFEPWCKIDYWRQFVSDPFEKKDYSSALEVIQAVMGPILLRRTKNMKDEDGNPLVQLPPKEVVIEMIRFSDTEAGLYKYFLSKAEHSVKESLARGDLLKKYSTILLHILRLRQVCCHFKLLGSQDENDEDLKNMKLINDIPDISTLLGEDSQSPGSSSEGMPDFIEDFKTKYPNSDALKDLECSICTCEAISPLTSVVFTRCGHPFCESCLLEYIQFQNKKGSETICPNCRAAVESRYLLKLEDINGKLEPVPYSNTKKSSKIVALIRHLKHLQDTSANEQVVVFSQFSSYLDILENELRQSFASDICEIYKFDGRLDLKERSNVLAKFTEKSLVKMKVLLLSLKAGGVGLNLTCASHAFIMDPWWSPGMEDQAMDRIHRIGQSNTVKIYRFIVENSIEEKMLRIQEKKRSLGEFVDADEEERRRSRIEEIKMLFA.

The span at 92–104 shows a compositional bias: basic and acidic residues; the sequence is KETKGCSDAHDDL. Residues 92-118 form a disordered region; sequence KETKGCSDAHDDLNTETQNSQNTIVNG. The span at 106-118 shows a compositional bias: polar residues; that stretch reads TETQNSQNTIVNG. Positions 447-652 constitute a Helicase ATP-binding domain; sequence PISKSILKGG…FSLIKFMNFE (206 aa). 460 to 467 contributes to the ATP binding site; it reads DEMGLGKT. The short motif at 603-606 is the DEGH box element; that stretch reads DEGH. Residues 832 to 880 form an RING-type zinc finger; that stretch reads CSICTCEAISPLTSVVFTRCGHPFCESCLLEYIQFQNKKGSETICPNCR. A Helicase C-terminal domain is found at 914 to 1072; the sequence is ALIRHLKHLQ…EFVDADEEER (159 aa).

It belongs to the SNF2/RAD54 helicase family.

It is found in the cytoplasm. The protein localises to the nucleus. Its function is as follows. Probable helicase, member of the UBC2/RAD6 epistasis group. Functions with DNA repair protein RAD18 in error-free postreplication DNA repair. Involved in the maintenance of wild-type rates of instability of simple repetitive sequences such as poly(GT) repeats. Seems to be involved in maintaining a balance which acts in favor of error-prone non-homologous joining during DNA double-strand breaks repairs. The chain is DNA repair protein RAD5 (RAD5) from Eremothecium gossypii (strain ATCC 10895 / CBS 109.51 / FGSC 9923 / NRRL Y-1056) (Yeast).